Here is a 486-residue protein sequence, read N- to C-terminus: Solute carrier family 2, facilitated glucose transporter member 5 (486 aa).

The residue at position 1 (Met1) is an N-acetylmethionine. The Cytoplasmic segment spans residues 1 to 19; sequence MEQEGQEKKKEGRLTLVLA. The helical transmembrane segment at 20 to 40 threads the bilayer; it reads LRTLIAAFGSSFQYAYNVSVC. Tyr33 serves as a coordination point for D-fructose. At 41–69 the chain is on the extracellular side; sequence NSPSELMTEFYNDTYYDRTGELIDEFPLT. Residue Asn52 is glycosylated (N-linked (GlcNAc...) asparagine). A helical transmembrane segment spans residues 70 to 92; it reads LLWSVTVSMFPSGGFAGSLLVGP. The Cytoplasmic portion of the chain corresponds to 93-99; that stretch reads LVNKFGR. A helical membrane pass occupies residues 100 to 120; it reads KGALLFNNIFSIVPAILMGCS. Residues 121–127 lie on the Extracellular side of the membrane; that stretch reads KVARSFE. Residues 128-150 traverse the membrane as a helical segment; sequence LIIISRLLVGICAGVSSNVVPMY. Topologically, residues 151-162 are cytoplasmic; that stretch reads LGELAPKNLRGA. A helical membrane pass occupies residues 163 to 183; it reads LGVESQLFITLGILVAQIFGL. Gln168 contributes to the D-fructose binding site. Residues 184-192 lie on the Extracellular side of the membrane; sequence RSIRQQKGW. Residues 193–211 traverse the membrane as a helical segment; it reads PILLGLTGGPAAAACPPFF. The Cytoplasmic portion of the chain corresponds to 212 to 274; it reads PESPRYLLIG…LCAMRGLAWQ (63 aa). Residues 275 to 294 form a helical membrane-spanning segment; sequence LISVVPLMWQQLSGVNAIYY. Residues Gln284 and 292-294 each bind D-fructose; that span reads IYY. Topologically, residues 295–306 are extracellular; sequence YDQIYLSPLDTD. A helical transmembrane segment spans residues 307-327; the sequence is TQYYTAATGAVNVLMTVCTVF. Topologically, residues 328–334 are cytoplasmic; that stretch reads VVESWAR. A helical membrane pass occupies residues 335-355; it reads LLLLLGFSPLAPTCCVLTAAL. The Extracellular segment spans residues 356-363; sequence ALQDTVSW. A helical transmembrane segment spans residues 364–385; sequence MPYISIVCIIVYVIGHAIGPAI. A D-fructose-binding site is contributed by His379. Residues 386-402 are Cytoplasmic-facing; the sequence is RSLYTEIFLQSGRPPTW. Residues 403-421 traverse the membrane as a helical segment; the sequence is WGQVHWLSNFTVGLVFPLI. Residue 407–408 participates in D-fructose binding; it reads HW. The Extracellular segment spans residues 422–426; sequence QWAGL. Residues 427–447 traverse the membrane as a helical segment; the sequence is YSFIIFGVACLSTTVYTFLIV. At 448 to 486 the chain is on the cytoplasmic side; sequence PETKGKSFIEIIRRFIRMNKVEVSPDREELKDFPPDVSE.

This sequence belongs to the major facilitator superfamily. Sugar transporter (TC 2.A.1.1) family. Glucose transporter subfamily. Detected in jejunum. Detected at the intestinal brush-border membrane (at protein level). Detected in duodenum, jejunum and kidney.

It localises to the apical cell membrane. Its subcellular location is the cell membrane. It is found in the sarcolemma. The catalysed reaction is D-fructose(out) = D-fructose(in). In terms of biological role, functions as a fructose transporter that has only low activity with other monosaccharides. Can mediate the uptake of deoxyglucose, but with low efficiency. Essential for fructose uptake in the small intestine. Plays a role in the regulation of salt uptake and blood pressure in response to dietary fructose. Required for the development of high blood pressure in response to high dietary fructose intake. This chain is Solute carrier family 2, facilitated glucose transporter member 5, found in Oryctolagus cuniculus (Rabbit).